We begin with the raw amino-acid sequence, 635 residues long: Biosynthetic arginine decarboxylase (635 aa).

Lys-100 bears the N6-(pyridoxal phosphate)lysine mark. 282–292 is a binding site for substrate; it reads LDIGGGLGVDY.

Belongs to the Orn/Lys/Arg decarboxylase class-II family. SpeA subfamily. The cofactor is Mg(2+). Pyridoxal 5'-phosphate is required as a cofactor.

The catalysed reaction is L-arginine + H(+) = agmatine + CO2. It functions in the pathway amine and polyamine biosynthesis; agmatine biosynthesis; agmatine from L-arginine: step 1/1. Functionally, catalyzes the biosynthesis of agmatine from arginine. The polypeptide is Biosynthetic arginine decarboxylase (Geotalea uraniireducens (strain Rf4) (Geobacter uraniireducens)).